The primary structure comprises 66 residues: Photosystem II reaction center protein J (66 aa).

Residues 1–25 (MSGKKSPYPDGRIPDRNPDGTPAVP) are disordered. Residues 37-57 (LWLVATAGGMAVLFVVGLFFY) form a helical membrane-spanning segment.

It belongs to the PsbJ family. In terms of assembly, PSII is composed of 1 copy each of membrane proteins PsbA, PsbB, PsbC, PsbD, PsbE, PsbF, PsbH, PsbI, PsbJ, PsbK, PsbL, PsbM, PsbT, PsbX, PsbY, PsbZ, Psb30/Ycf12, peripheral proteins PsbO, CyanoQ (PsbQ), PsbU, PsbV and a large number of cofactors. It forms dimeric complexes.

The protein localises to the cellular thylakoid membrane. In terms of biological role, one of the components of the core complex of photosystem II (PSII). PSII is a light-driven water:plastoquinone oxidoreductase that uses light energy to abstract electrons from H(2)O, generating O(2) and a proton gradient subsequently used for ATP formation. It consists of a core antenna complex that captures photons, and an electron transfer chain that converts photonic excitation into a charge separation. The polypeptide is Photosystem II reaction center protein J (Synechococcus sp. (strain CC9605)).